The sequence spans 944 residues: MFQNSMKQRMNWEDFYGPNLGYALELYDQYTQDPNSIDPDLKEMFDELGAPPSDIKEASGTKEKGRVTADLIQKIASAVRLAEDIRTYGHLNASVNPLRKDEKKSELFPLSDYGLTEEEIKAIPASVICKDAPKNISNGLEAIQYLRNTYKRTISFEFDHVHDFKEREWLTRKIESGELFQKNSAEKLSAVLERLTEVEGFEQFLHRTFVGQKRFSIEGLDALVPVLDDIIAQSVKSGTTSVNIGMAHRGRLNVLAHVLGKPYEIIFSEFQHAPNKDLVPSEGSIGISYGWTGDVKYHLGANRELQDAETKSARITLANNPSHLEFINPIVEGSTRAAQETRTQSGYPVQDETKSLAILIHGDAAFPGEGIVAETLNLSSLKGYQVGGAIHIIANNMIGFTTESAESRSTKYASDLAKGYEIPIVHVNADDPEACLSAVKFAVEYRKTFNKDFLIDLIGYRRYGHNEMDEPSTTQPMLYDAVRKHPTVKQIFAEKLVKEGVVTEEVVQNIEKSVTKRIEDAYQKVPSKKEHTACEIELPEPVSNGFPDVDTSIDFDVLRKLNGELINWPESFNVFGKLKRILERRAKAFDDDRKVEWSLAESLAFASILKDGTPIRLTGQDSERGTFAQRNLVLHDSETGKEFVPLHHLSDCSTSFAVHNSPLSEGSVLGFEYGYNVHSPETLVLWEAQYGDFANAAQVYFDQFISAGRAKWGQKSGLVMLLPHGYEGQGPEHSSGRIERFLQLAAENNWTVANLTSAAQYFHILRRQAKMLLREEIRPLVIMTPKSLLRNPNTVSEVQELSESRFQPVYEQSGLSHDYEKVTRLVLSSGKVSIDISDHFNKLEDGKEWLHIARIEQLYPFPAKGVKELFAKLPNLKEIVWVQEEPQNMGAWGYISPYLTEIAPEGVSVQYIGRRRRSSPAEGDPTVHKKEQERIVSDSLTRKN.

The disordered stretch occupies residues 914–944 (RRRRSSPAEGDPTVHKKEQERIVSDSLTRKN). Positions 925 to 936 (PTVHKKEQERIV) are enriched in basic and acidic residues.

Belongs to the alpha-ketoglutarate dehydrogenase family. In terms of assembly, homodimer. Part of the 2-oxoglutarate dehydrogenase (OGDH) complex composed of E1 (2-oxoglutarate dehydrogenase), E2 (dihydrolipoamide succinyltransferase) and E3 (dihydrolipoamide dehydrogenase); the complex contains multiple copies of the three enzymatic components (E1, E2 and E3). It depends on thiamine diphosphate as a cofactor.

The catalysed reaction is N(6)-[(R)-lipoyl]-L-lysyl-[protein] + 2-oxoglutarate + H(+) = N(6)-[(R)-S(8)-succinyldihydrolipoyl]-L-lysyl-[protein] + CO2. Functionally, E1 component of the 2-oxoglutarate dehydrogenase (OGDH) complex which catalyzes the decarboxylation of 2-oxoglutarate, the first step in the conversion of 2-oxoglutarate to succinyl-CoA and CO(2). This is 2-oxoglutarate dehydrogenase E1 component from Bacillus subtilis (strain 168).